The sequence spans 419 residues: Elongation factor Tu, chloroplastic (419 aa).

The tr-type G domain maps to 10–214 (KPHVNIGTIG…TVDEHIPTPK (205 aa)). The G1 stretch occupies residues 19–26 (GHVDHGKT). 19–26 (GHVDHGKT) lines the GTP pocket. Threonine 26 provides a ligand contact to Mg(2+). Residues 60 to 64 (GITIN) are G2. Residues 81 to 84 (DCPG) form a G3 region. GTP contacts are provided by residues 81–85 (DCPGH) and 136–139 (NKAD). The segment at 136–139 (NKAD) is G4. Residues 174–176 (SAL) are G5.

This sequence belongs to the TRAFAC class translation factor GTPase superfamily. Classic translation factor GTPase family. EF-Tu/EF-1A subfamily.

It localises to the plastid. The protein resides in the chloroplast. The catalysed reaction is GTP + H2O = GDP + phosphate + H(+). In terms of biological role, GTP hydrolase that promotes the GTP-dependent binding of aminoacyl-tRNA to the A-site of ribosomes during protein biosynthesis. The chain is Elongation factor Tu, chloroplastic (tufA) from Stigeoclonium helveticum (Green alga).